Here is a 589-residue protein sequence, read N- to C-terminus: PTS system mannitol-specific EIICB component (589 aa).

Over 1–25 (MERKSSLKVRVQKLGTSLSNMVMPN) the chain is Cytoplasmic. Residues 14-347 (LGTSLSNMVM…ILKSDNSDDD (334 aa)) enclose the PTS EIIC type-2 domain. Residues 26 to 47 (IGAFIAWGVAASLFIATGYLPN) traverse the membrane as a helical segment. Topologically, residues 48–51 (KALD) are extracellular. The helical transmembrane segment at 52–73 (TNVVGPMLKYVLPLLIGYTGGY) threads the bilayer. Residues 74–136 (NIHKQRGGVI…TGFEMLVNNF (63 aa)) are Cytoplasmic-facing. The chain crosses the membrane as a helical span at residues 137 to 158 (SLGLIGFALMVLAFFVIGPVVA). Topologically, residues 159-167 (QLTEWVGIG) are extracellular. A helical membrane pass occupies residues 168 to 188 (VEAIVKVHLLPLANLIIEPAK). Residues 189 to 275 (ILFLNNALNH…VMMKPAMFLA (87 aa)) lie on the Cytoplasmic side of the membrane. The helical transmembrane segment at 276-295 (VIAGGLTGTFTFQTLGAGLT) threads the bilayer. Residues 296-317 (APASPGSIIAIMGMSPKGWGPH) are Extracellular-facing. Residues 318–339 (LVVLAGVFAAAVASFLVASIIL) form a helical membrane-spanning segment. At 340–589 (KSDNSDDDSL…YDKLVARMHK (250 aa)) the chain is on the cytoplasmic side. The PTS EIIB type-2 domain maps to 383–478 (HQIIFACDAG…SLTNGKASGS (96 aa)). Catalysis depends on C389, which acts as the Phosphocysteine intermediate; for EIIB activity. Phosphocysteine; by EIIA is present on C389.

Homodimer.

It localises to the cell membrane. It catalyses the reaction D-mannitol(out) + N(pros)-phospho-L-histidyl-[protein] = D-mannitol 1-phosphate(in) + L-histidyl-[protein]. In terms of biological role, the phosphoenolpyruvate-dependent sugar phosphotransferase system (sugar PTS), a major carbohydrate active transport system, catalyzes the phosphorylation of incoming sugar substrates concomitantly with their translocation across the cell membrane. The enzyme II CmtAB PTS system is involved in D-mannitol transport. The sequence is that of PTS system mannitol-specific EIICB component from Streptococcus mutans serotype c (strain ATCC 700610 / UA159).